We begin with the raw amino-acid sequence, 759 residues long: Hormone-sensitive lipase (759 aa).

The Involved in the stabilization of the negatively charged intermediate by the formation of the oxyanion hole motif lies at 349 to 351 (HGG). Residue serine 423 is part of the active site. Residues 534-553 (GRKPQKTTSPTAESVRPTES) are disordered. Phosphoserine is present on serine 557. The residue at position 559 (serine 559) is a Phosphoserine; by AMPK. The residue at position 574 (threonine 574) is a Phosphothreonine. A disordered region spans residues 583-604 (LSNSEPSDSPEMSQSMETLGPS). The span at 585 to 604 (NSEPSDSPEMSQSMETLGPS) shows a compositional bias: polar residues. A phosphoserine mark is found at serine 597, serine 618, serine 650, and serine 651. Catalysis depends on residues aspartate 694 and histidine 724.

The protein belongs to the 'GDXG' lipolytic enzyme family. Monomer and homodimer. Interacts with CAVIN1 in the adipocyte cytoplasm. Interacts with PLIN5. Phosphorylation by AMPK reduces its translocation towards the lipid droplets.

The protein resides in the cell membrane. The protein localises to the membrane. Its subcellular location is the caveola. It is found in the cytoplasm. It localises to the cytosol. The protein resides in the lipid droplet. It carries out the reaction a diacylglycerol + H2O = a monoacylglycerol + a fatty acid + H(+). The enzyme catalyses a triacylglycerol + H2O = a diacylglycerol + a fatty acid + H(+). The catalysed reaction is a monoacylglycerol + H2O = glycerol + a fatty acid + H(+). It catalyses the reaction Hydrolyzes glycerol monoesters of long-chain fatty acids.. It carries out the reaction cholesteryl (9Z-octadecenoate) + H2O = cholesterol + (9Z)-octadecenoate + H(+). The enzyme catalyses all-trans-retinyl hexadecanoate + H2O = all-trans-retinol + hexadecanoate + H(+). The catalysed reaction is 1,2-di-(9Z-octadecenoyl)-glycerol + H2O = (9Z-octadecenoyl)-glycerol + (9Z)-octadecenoate + H(+). It catalyses the reaction 2-(5Z,8Z,11Z,14Z-eicosatetraenoyl)-glycerol + H2O = glycerol + (5Z,8Z,11Z,14Z)-eicosatetraenoate + H(+). It carries out the reaction 1-(9Z-octadecenoyl)-glycerol + H2O = glycerol + (9Z)-octadecenoate + H(+). The enzyme catalyses 2-(9Z-octadecenoyl)-glycerol + H2O = glycerol + (9Z)-octadecenoate + H(+). The catalysed reaction is 1-O-hexadecyl-2-acetyl-sn-glycerol + H2O = 1-O-hexadecyl-sn-glycerol + acetate + H(+). It catalyses the reaction 1,2-di-(9Z-octadecenoyl)-sn-glycerol + H2O = (9Z-octadecenoyl)-glycerol + (9Z)-octadecenoate + H(+). It carries out the reaction 1,3-di-(9Z-octadecenoyl)-glycerol + H2O = 1-(9Z-octadecenoyl)-glycerol + (9Z)-octadecenoate + H(+). The enzyme catalyses 1,2-di-(9Z-octadecenoyl)-glycerol + (9Z)-octadecenoate + H(+) = 1,2,3-tri-(9Z-octadecenoyl)-glycerol + H2O. The catalysed reaction is 2,3-di-(9Z)-octadecenoyl-sn-glycerol + H2O = 2-(9Z-octadecenoyl)-glycerol + (9Z)-octadecenoate + H(+). It catalyses the reaction 1,2,3-tri-(9Z-octadecenoyl)-glycerol + H2O = di-(9Z)-octadecenoylglycerol + (9Z)-octadecenoate + H(+). It carries out the reaction 1,2-di-(9Z-octadecenoyl)-glycerol + H2O = 2-(9Z-octadecenoyl)-glycerol + (9Z)-octadecenoate + H(+). The protein operates within glycerolipid metabolism; triacylglycerol degradation. Lipase with broad substrate specificity, catalyzing the hydrolysis of triacylglycerols (TAGs), diacylglycerols (DAGs), monoacylglycerols (MAGs), cholesteryl esters and retinyl esters. Shows a preferential hydrolysis of DAGs over TAGs and MAGs and of the fatty acid (FA) esters at the sn-1 and sn-2 positions of the glycerol backbone in TAGs. Preferentially hydrolyzes FA esters at the sn-3 position of the glycerol backbone in DAGs. Catalyzes the hydrolysis of 2-arachidonoylglycerol, an endocannabinoid and of 2-acetyl monoalkylglycerol ether, the penultimate precursor of the pathway for de novo synthesis of platelet-activating factor. In adipose tissue and heart, it primarily hydrolyzes stored triglycerides to free fatty acids, while in steroidogenic tissues, it principally converts cholesteryl esters to free cholesterol for steroid hormone production. The chain is Hormone-sensitive lipase (Lipe) from Mus musculus (Mouse).